Reading from the N-terminus, the 213-residue chain is Thiamine import ATP-binding protein ThiQ (213 aa).

Residues 1 to 212 (MIELNVTFDY…EQGRIVADQL (212 aa)) enclose the ABC transporter domain. 31–38 (GESGAGKS) serves as a coordination point for ATP.

Belongs to the ABC transporter superfamily. Thiamine importer (TC 3.A.1.19.1) family. As to quaternary structure, the complex is composed of two ATP-binding proteins (ThiQ), two transmembrane proteins (ThiP) and a solute-binding protein (ThiB).

The protein resides in the cell inner membrane. The catalysed reaction is thiamine(out) + ATP + H2O = thiamine(in) + ADP + phosphate + H(+). Its function is as follows. Part of the ABC transporter complex ThiBPQ involved in thiamine import. Responsible for energy coupling to the transport system. This is Thiamine import ATP-binding protein ThiQ from Haemophilus ducreyi (strain 35000HP / ATCC 700724).